We begin with the raw amino-acid sequence, 75 residues long: Translational regulator CsrA (75 aa).

Belongs to the CsrA/RsmA family. As to quaternary structure, homodimer; the beta-strands of each monomer intercalate to form a hydrophobic core, while the alpha-helices form wings that extend away from the core.

Its subcellular location is the cytoplasm. A translational regulator that binds mRNA to regulate translation initiation and/or mRNA stability. Usually binds in the 5'-UTR at or near the Shine-Dalgarno sequence preventing ribosome-binding, thus repressing translation. Its main target seems to be the major flagellin gene, while its function is anatagonized by FliW. The protein is Translational regulator CsrA of Thermosipho melanesiensis (strain DSM 12029 / CIP 104789 / BI429).